The chain runs to 446 residues: D(1A) dopamine receptor (446 aa).

Topologically, residues 1 to 23 are extracellular; that stretch reads MRTLNTSTMDGTGLVVERDFSFR. N-linked (GlcNAc...) asparagine glycosylation occurs at Asn5. A helical transmembrane segment spans residues 24-49; that stretch reads ILTACFLSLLILSTLLGNTLVCAAVI. Over 50–60 the chain is Cytoplasmic; sequence RFRHLRSKVTN. The helical transmembrane segment at 61–87 threads the bilayer; that stretch reads FFVISLAVSDLLVAVLVMPWKAVAEIA. Topologically, residues 88–96 are extracellular; it reads GFWPFGSFC. A disulfide bond links Cys96 and Cys186. The chain crosses the membrane as a helical span at residues 97-119; it reads NIWVAFDIMCSTASILNLCVISV. Over 120 to 138 the chain is Cytoplasmic; it reads DRYWAISSPFRYERKMTPK. The chain crosses the membrane as a helical span at residues 139 to 163; it reads AAFILISVAWTLSVLISFIPVQLSW. The Extracellular segment spans residues 164 to 192; it reads HKAKPTSPSDGNVTSLGKTTHNCDSSLSR. The chain crosses the membrane as a helical span at residues 193 to 218; sequence TYAISSSLISFYIPVAIMIVTYTRIY. The Cytoplasmic portion of the chain corresponds to 219–272; the sequence is RIAQKQIRRISALERAAVHAKNCQTTAGNGNPAECSQPESSFKMSFKRETKVLK. The helical transmembrane segment at 273 to 299 threads the bilayer; sequence TLSVIMGVFVCCWLPFFILNCMVPFCG. The Extracellular segment spans residues 300-312; that stretch reads SGETKPFCIDSIT. A helical membrane pass occupies residues 313 to 337; sequence FDVFVWFGWANSSLNPIIYAFNADF. Residues 338 to 446 lie on the Cytoplasmic side of the membrane; it reads RKAFSTLLGC…PITQNGQHPT (109 aa). 2 S-palmitoyl cysteine lipidation sites follow: Cys347 and Cys351.

It belongs to the G-protein coupled receptor 1 family. In terms of assembly, interacts with DNAJC14 via its C-terminus. Interacts with DRD2. Interacts with DORIP1.

It localises to the cell membrane. The protein localises to the endoplasmic reticulum membrane. Its subcellular location is the cell projection. It is found in the cilium membrane. The protein resides in the dendrite. It localises to the dendritic spine. Its function is as follows. Dopamine receptor whose activity is mediated by G proteins which activate adenylyl cyclase. The polypeptide is D(1A) dopamine receptor (DRD1) (Sus scrofa (Pig)).